We begin with the raw amino-acid sequence, 160 residues long: Nitrate reductase [NADH] (160 aa).

T37 lines the FAD pocket.

This sequence belongs to the nitrate reductase family. In terms of assembly, homodimer. Requires FAD as cofactor. The cofactor is heme. Mo-molybdopterin serves as cofactor.

The catalysed reaction is nitrite + NAD(+) + H2O = nitrate + NADH + H(+). In terms of biological role, nitrate reductase is a key enzyme involved in the first step of nitrate assimilation in plants, fungi and bacteria. The chain is Nitrate reductase [NADH] (NIA) from Lotus tetragonolobus (Winged pea).